Consider the following 520-residue polypeptide: Tetratricopeptide repeat protein 6 (520 aa).

TPR repeat units lie at residues 57–90, 101–138, 139–172, 176–209, 210–243, 245–280, 281–314, 320–347, 348–381, 382–415, 416–449, 450–483, and 484–517; these read MTMC…ISHS, ADCL…DKNS, YTAF…DATE, LNTF…SRTN, GSLC…NPCF, DAYV…NPAY, IKAR…DPKN, GRAV…ISTT, AEFL…NPKY, SLAY…DPEN, EYVL…CPFW, AAVY…KPND, and ALVY…EDYA.

The polypeptide is Tetratricopeptide repeat protein 6 (Homo sapiens (Human)).